The primary structure comprises 88 residues: UPF0213 protein SAG0778 (88 aa).

Residues 4 to 80 form the GIY-YIG domain; sequence VPAYMYVLEC…QKTRQAKLTY (77 aa).

The protein belongs to the UPF0213 family.

This Streptococcus agalactiae serotype V (strain ATCC BAA-611 / 2603 V/R) protein is UPF0213 protein SAG0778.